The sequence spans 238 residues: Ribonuclease PH (238 aa).

Residues Arg-86 and Gly-124–Arg-126 each bind phosphate.

The protein belongs to the RNase PH family. Homohexameric ring arranged as a trimer of dimers.

The enzyme catalyses tRNA(n+1) + phosphate = tRNA(n) + a ribonucleoside 5'-diphosphate. Functionally, phosphorolytic 3'-5' exoribonuclease that plays an important role in tRNA 3'-end maturation. Removes nucleotide residues following the 3'-CCA terminus of tRNAs; can also add nucleotides to the ends of RNA molecules by using nucleoside diphosphates as substrates, but this may not be physiologically important. Probably plays a role in initiation of 16S rRNA degradation (leading to ribosome degradation) during starvation. This Erwinia tasmaniensis (strain DSM 17950 / CFBP 7177 / CIP 109463 / NCPPB 4357 / Et1/99) protein is Ribonuclease PH.